A 249-amino-acid chain; its full sequence is Acidic leucine-rich nuclear phosphoprotein 32 family member A (249 aa).

Thr-15 bears the Phosphothreonine mark. Ser-17 carries the phosphoserine modification. LRR repeat units lie at residues 18 to 41 (DVKE…TDEF), 43 to 64 (ELEF…PKLN), 65 to 87 (KLKK…AEKC), and 89 to 110 (NLTH…EPLK). The region spanning 123–161 (CEVTNLNDYRENVFKLLPQLTYLDGYDRDDKEAPDSDAE) is the LRRCT domain. The segment covering 147–156 (GYDRDDKEAP) has biased composition (basic and acidic residues). Positions 147–249 (GYDRDDKEAP…EPXDXGEDDD (103 aa)) are disordered. Positions 150–174 (RDDKEAPDSDAEGYVEGLDDDEEDE) are necessary for tumor-suppressive function. A compositionally biased stretch (acidic residues) spans 157–230 (DSDAEGYVEG…DEEDEEDVGE (74 aa)). Phosphoserine is present on residues Ser-158 and Ser-204. Positions 165–249 (EGLDDDEEDE…EPXDXGEDDD (85 aa)) are interaction with E4F1.

This sequence belongs to the ANP32 family. As to quaternary structure, component of the SET complex, composed of at least ANP32A, APEX1, HMGB2, NME1, SET and TREX1. Directly interacts with SET. Interacts with ATXN1/SCA1. Interacts with MAP1B. Interacts with ELAVL1. Part of the INHAT (inhibitor of histone acetyltransferases) complex. Interacts with E4F1. In terms of processing, phosphorylated on serine residues, at least in part by casein kinase 2/CK2. Some glutamate residues are glycylated by TTLL8. This modification occurs exclusively on glutamate residues and results in a glycine chain on the gamma-carboxyl group.

The protein localises to the nucleus. It localises to the cytoplasm. Its subcellular location is the endoplasmic reticulum. Multifunctional protein that is involved in the regulation of many processes including tumor suppression, apoptosis, cell cycle progression or transcription. Promotes apoptosis by favouring the activation of caspase-9/CASP9 and allowing apoptosome formation. In addition, plays a role in the modulation of histone acetylation and transcription as part of the INHAT (inhibitor of histone acetyltransferases) complex. Inhibits the histone-acetyltranferase activity of EP300/CREBBP (CREB-binding protein) and EP300/CREBBP-associated factor by histone masking. Preferentially binds to unmodified histone H3 and sterically inhibiting its acetylation and phosphorylation leading to cell growth inhibition. Participates in other biochemical processes such as regulation of mRNA nuclear-to-cytoplasmic translocation and stability by its association with ELAVL1 (Hu-antigen R). Plays a role in E4F1-mediated transcriptional repression as well as inhibition of protein phosphatase 2A. The polypeptide is Acidic leucine-rich nuclear phosphoprotein 32 family member A (ANP32A) (Canis lupus familiaris (Dog)).